Reading from the N-terminus, the 107-residue chain is Insulin (107 aa).

The N-terminal stretch at Met-1–Ala-24 is a signal peptide. 3 disulfides stabilise this stretch: Cys-31/Cys-93, Cys-43/Cys-106, and Cys-92/Cys-97. Residues Asp-57 to Val-84 constitute a propeptide, c peptide.

It belongs to the insulin family. As to quaternary structure, heterodimer of a B chain and an A chain linked by two disulfide bonds.

The protein localises to the secreted. Functionally, insulin decreases blood glucose concentration. It increases cell permeability to monosaccharides, amino acids and fatty acids. It accelerates glycolysis, the pentose phosphate cycle, and glycogen synthesis in liver. This is Insulin (INS) from Gallus gallus (Chicken).